Here is a 376-residue protein sequence, read N- to C-terminus: Putative cytosolic 5'-nucleotidase 3 (376 aa).

The active-site Nucleophile is Asp119. Positions 119 and 121 each coordinate Mg(2+). Catalysis depends on Asp121, which acts as the Proton donor. Residues Glu168, Ser189, 236–237 (SA), and Lys286 contribute to the substrate site. Asp312 serves as a coordination point for Mg(2+).

The protein belongs to the pyrimidine 5'-nucleotidase family.

The protein resides in the cytoplasm. It catalyses the reaction a ribonucleoside 5'-phosphate + H2O = a ribonucleoside + phosphate. The sequence is that of Putative cytosolic 5'-nucleotidase 3 from Caenorhabditis elegans.